A 205-amino-acid polypeptide reads, in one-letter code: Protein N-terminal glutamine amidohydrolase (205 aa).

Active-site residues include C28, H81, and D97.

This sequence belongs to the NTAQ1 family. In terms of assembly, monomer.

The protein resides in the cytoplasm. The protein localises to the cytosol. Its subcellular location is the nucleus. It carries out the reaction N-terminal L-glutaminyl-[protein] + H2O = N-terminal L-glutamyl-[protein] + NH4(+). Its function is as follows. Mediates the side-chain deamidation of N-terminal glutamine residues to glutamate, an important step in N-end rule pathway of protein degradation. Conversion of the resulting N-terminal glutamine to glutamate renders the protein susceptible to arginylation, polyubiquitination and degradation as specified by the N-end rule. Does not act on substrates with internal or C-terminal glutamine and does not act on non-glutamine residues in any position. Does not deaminate acetylated N-terminal glutamine. With the exception of proline, all tested second-position residues on substrate peptides do not greatly influence the activity. In contrast, a proline at position 2, virtually abolishes deamidation of N-terminal glutamine. The sequence is that of Protein N-terminal glutamine amidohydrolase from Homo sapiens (Human).